Reading from the N-terminus, the 194-residue chain is Imidazoleglycerol-phosphate dehydratase (194 aa).

This sequence belongs to the imidazoleglycerol-phosphate dehydratase family.

It is found in the cytoplasm. The enzyme catalyses D-erythro-1-(imidazol-4-yl)glycerol 3-phosphate = 3-(imidazol-4-yl)-2-oxopropyl phosphate + H2O. It functions in the pathway amino-acid biosynthesis; L-histidine biosynthesis; L-histidine from 5-phospho-alpha-D-ribose 1-diphosphate: step 6/9. This chain is Imidazoleglycerol-phosphate dehydratase, found in Streptococcus gordonii (strain Challis / ATCC 35105 / BCRC 15272 / CH1 / DL1 / V288).